A 537-amino-acid chain; its full sequence is Lysine--tRNA ligase (537 aa).

A 'HIGH' region motif is present at residues 30 to 38 (PSGNIHIGN). Positions 276–280 (AMSSS) match the 'KMSKS' region motif.

Belongs to the class-I aminoacyl-tRNA synthetase family.

The protein resides in the cytoplasm. The catalysed reaction is tRNA(Lys) + L-lysine + ATP = L-lysyl-tRNA(Lys) + AMP + diphosphate. The chain is Lysine--tRNA ligase from Methanosarcina barkeri.